We begin with the raw amino-acid sequence, 168 residues long: Phosphopantetheine adenylyltransferase (168 aa).

Thr14 is a binding site for substrate. ATP-binding positions include 14–15 (TF) and His22. Lys46, Leu78, and Arg92 together coordinate substrate. ATP-binding positions include 93–95 (GLR), Glu103, and 128–134 (YSFISSS).

Belongs to the bacterial CoaD family. In terms of assembly, homohexamer. Requires Mg(2+) as cofactor.

It is found in the cytoplasm. It carries out the reaction (R)-4'-phosphopantetheine + ATP + H(+) = 3'-dephospho-CoA + diphosphate. Its pathway is cofactor biosynthesis; coenzyme A biosynthesis; CoA from (R)-pantothenate: step 4/5. In terms of biological role, reversibly transfers an adenylyl group from ATP to 4'-phosphopantetheine, yielding dephospho-CoA (dPCoA) and pyrophosphate. The protein is Phosphopantetheine adenylyltransferase of Xanthomonas oryzae pv. oryzae (strain MAFF 311018).